A 380-amino-acid chain; its full sequence is Lipid-A-disaccharide synthase (380 aa).

This sequence belongs to the LpxB family.

The catalysed reaction is a lipid X + a UDP-2-N,3-O-bis[(3R)-3-hydroxyacyl]-alpha-D-glucosamine = a lipid A disaccharide + UDP + H(+). The protein operates within bacterial outer membrane biogenesis; LPS lipid A biosynthesis. Condensation of UDP-2,3-diacylglucosamine and 2,3-diacylglucosamine-1-phosphate to form lipid A disaccharide, a precursor of lipid A, a phosphorylated glycolipid that anchors the lipopolysaccharide to the outer membrane of the cell. In Rickettsia typhi (strain ATCC VR-144 / Wilmington), this protein is Lipid-A-disaccharide synthase.